The chain runs to 391 residues: Ribosomal RNA small subunit methyltransferase H (391 aa).

The tract at residues 1–23 (MDVDVQDDVQGRAGEGAEERAHD) is disordered. S-adenosyl-L-methionine is bound by residues 59-61 (GGH), Asp78, Leu112, Asp126, and Gln133. Residues 284–391 (SSSSAPPDLP…EPGATVERTP (108 aa)) form a disordered region. A compositionally biased stretch (basic and acidic residues) spans 368 to 380 (RTQEFETHPHLEP).

The protein belongs to the methyltransferase superfamily. RsmH family.

The protein localises to the cytoplasm. It catalyses the reaction cytidine(1402) in 16S rRNA + S-adenosyl-L-methionine = N(4)-methylcytidine(1402) in 16S rRNA + S-adenosyl-L-homocysteine + H(+). Functionally, specifically methylates the N4 position of cytidine in position 1402 (C1402) of 16S rRNA. This Kineococcus radiotolerans (strain ATCC BAA-149 / DSM 14245 / SRS30216) protein is Ribosomal RNA small subunit methyltransferase H.